Reading from the N-terminus, the 153-residue chain is Large ribosomal subunit protein bL9 (153 aa).

This sequence belongs to the bacterial ribosomal protein bL9 family.

Its function is as follows. Binds to the 23S rRNA. This is Large ribosomal subunit protein bL9 from Synechococcus sp. (strain JA-3-3Ab) (Cyanobacteria bacterium Yellowstone A-Prime).